Consider the following 709-residue polypeptide: MVKRTGNGTDAIDGSRKRGRKDLRSIRRARNDKEPVEEPEIPVASEEDGELSEDSEEDATNEVQEQEDSKEKAYGALLTILKSEHPEDRQRERRKKKQDLQDPSSSDDELSEDEKGEVEANLVDTPGEEEPQSEEELSEGDEDESEDERDPFESHFNMQSESIDSLDEAWKQKKIVNKSGKIRVDDDESLIYTKTLAGKGQEFELPSHKGHLSSYPLKRKLKIQNNLLESQDDVLTPLQRKIVDPIFQYRDLLYEYEDYEQDEDEYRDLYVLHVLNHIYKTRDRILKDNQRLATNPDGEFLDQGFTRPKVLIVAPTRDTAYQIVSKVIEKSGLDQVDKKSKLRDQFFEDVLPPSSKPKSFRHTFKGNTNDFFVLGVKFTRKAIRLYSNFYQSDLIVCSPLGLQLILENTDRKKRQDDFLSSIELMIIDQLNSIEFQNVSHLFTIFAHMNKIPKEQHDTDFGRVRMWYINEQAKLLRQTLIFTRYVTPTANFLLNGKCRNIGGRWKNHHQITGEQSSVSKLGFRVRQIFQRVDLGGASVVDEPDYRFRFFTSVIVPSITKSTGYEDGILLYIPDYADFIRVRNYLKDKTTILFGDINEYSDVRQLTSTRSLFQQGRIKVLLYTERLHHFRRYEIKGVKSVIFYQPPSNPEFYNEVVRYIGKSAFLGDTDLNISTVRCVYSKLDGLALERIVSSKRAAVLTHGQNEIYEFK.

The tract at residues 1–156 (MVKRTGNGTD…DERDPFESHF (156 aa)) is disordered. The segment covering 22-36 (DLRSIRRARNDKEPV) has biased composition (basic and acidic residues). Residues 37–66 (EEPEIPVASEEDGELSEDSEEDATNEVQEQ) are compositionally biased toward acidic residues. Over residues 82-91 (KSEHPEDRQR) the composition is skewed to basic and acidic residues. Composition is skewed to acidic residues over residues 105–116 (SSDDELSEDEKG) and 126–150 (PGEE…DERD).

It belongs to the UTP25 family. Component of the ribosomal small subunit (SSU) processome composed of at least 40 protein subunits and snoRNA U3.

It is found in the nucleus. The protein localises to the nucleolus. In terms of biological role, DEAD-box RNA helicase-like protein required for pre-18S rRNA processing, specifically at sites A0, A1, and A2. In Zygosaccharomyces rouxii (strain ATCC 2623 / CBS 732 / NBRC 1130 / NCYC 568 / NRRL Y-229), this protein is U3 small nucleolar RNA-associated protein 25 (UTP25).